We begin with the raw amino-acid sequence, 546 residues long: Undecaprenyl phosphate-alpha-4-amino-4-deoxy-L-arabinose arabinosyl transferase (546 aa).

The next 12 helical transmembrane spans lie at 6 to 26, 87 to 107, 113 to 133, 177 to 197, 208 to 228, 260 to 280, 289 to 309, 313 to 333, 345 to 365, 380 to 400, 410 to 430, and 450 to 467; these read INLA…PLGL, AASA…VGRF, AWVT…GTYS, LLTK…PFMI, WGWW…LAIH, YYLP…PSAI, SPLL…FSAA, LVTY…QGII, IGSV…IVLF, PWLL…SIKA, YMLM…NISI, and AILI…NWYF.

This sequence belongs to the glycosyltransferase 83 family.

Its subcellular location is the cell inner membrane. It carries out the reaction 4-amino-4-deoxy-alpha-L-arabinopyranosyl di-trans,octa-cis-undecaprenyl phosphate + lipid IVA = lipid IIA + di-trans,octa-cis-undecaprenyl phosphate.. It functions in the pathway lipopolysaccharide metabolism; 4-amino-4-deoxy-beta-L-arabinose-lipid A biosynthesis. In terms of biological role, catalyzes the transfer of the L-Ara4N moiety of the glycolipid undecaprenyl phosphate-alpha-L-Ara4N to lipid A. The modified arabinose is attached to lipid A and is required for resistance to polymyxin and cationic antimicrobial peptides. The polypeptide is Undecaprenyl phosphate-alpha-4-amino-4-deoxy-L-arabinose arabinosyl transferase (Shewanella sediminis (strain HAW-EB3)).